The chain runs to 420 residues: 3-oxo-tetronate kinase (420 aa).

Residues serine 258, 360–363 (GGET), and glycine 403 contribute to the ATP site.

This sequence belongs to the four-carbon acid sugar kinase family.

The catalysed reaction is 3-dehydro-L-erythronate + ATP = 3-dehydro-4-O-phospho-L-erythronate + ADP + H(+). It carries out the reaction 3-dehydro-D-erythronate + ATP = 3-dehydro-4-O-phospho-D-erythronate + ADP + H(+). Its function is as follows. Catalyzes the ATP-dependent phosphorylation of 3-oxo-tetronate to 3-oxo-tetronate 4-phosphate. The protein is 3-oxo-tetronate kinase of Salmonella typhimurium (strain LT2 / SGSC1412 / ATCC 700720).